The primary structure comprises 312 residues: Pantothenate synthetase (312 aa).

Residue 42–49 (MGALHTGH) participates in ATP binding. Residue H49 is the Proton donor of the active site. Q73 lines the (R)-pantoate pocket. Residue Q73 participates in beta-alanine binding. 159-162 (GEKD) provides a ligand contact to ATP. Q165 is a (R)-pantoate binding site. ATP is bound by residues V188 and 196–199 (LSSR).

It belongs to the pantothenate synthetase family. Homodimer.

It localises to the cytoplasm. It catalyses the reaction (R)-pantoate + beta-alanine + ATP = (R)-pantothenate + AMP + diphosphate + H(+). Its pathway is cofactor biosynthesis; (R)-pantothenate biosynthesis; (R)-pantothenate from (R)-pantoate and beta-alanine: step 1/1. Catalyzes the condensation of pantoate with beta-alanine in an ATP-dependent reaction via a pantoyl-adenylate intermediate. In Rhodococcus jostii (strain RHA1), this protein is Pantothenate synthetase.